Reading from the N-terminus, the 240-residue chain is Peptidyl-tRNA hydrolase (240 aa).

Y14 is a binding site for tRNA. H19 serves as the catalytic Proton acceptor. Residues F64, N66, and N112 each contribute to the tRNA site. Residues 196 to 227 are disordered; it reads EKPAQKQQPKQQSHIRQARSQQAPAKLPETGP. A compositionally biased stretch (polar residues) spans 209–218; the sequence is HIRQARSQQA.

This sequence belongs to the PTH family. In terms of assembly, monomer.

Its subcellular location is the cytoplasm. The enzyme catalyses an N-acyl-L-alpha-aminoacyl-tRNA + H2O = an N-acyl-L-amino acid + a tRNA + H(+). Functionally, hydrolyzes ribosome-free peptidyl-tRNAs (with 1 or more amino acids incorporated), which drop off the ribosome during protein synthesis, or as a result of ribosome stalling. In terms of biological role, catalyzes the release of premature peptidyl moieties from peptidyl-tRNA molecules trapped in stalled 50S ribosomal subunits, and thus maintains levels of free tRNAs and 50S ribosomes. The protein is Peptidyl-tRNA hydrolase of Mesorhizobium japonicum (strain LMG 29417 / CECT 9101 / MAFF 303099) (Mesorhizobium loti (strain MAFF 303099)).